The primary structure comprises 130 residues: Small ribosomal subunit protein uS8 (130 aa).

This sequence belongs to the universal ribosomal protein uS8 family. Part of the 30S ribosomal subunit. Contacts proteins S5 and S12.

Its function is as follows. One of the primary rRNA binding proteins, it binds directly to 16S rRNA central domain where it helps coordinate assembly of the platform of the 30S subunit. This is Small ribosomal subunit protein uS8 from Buchnera aphidicola subsp. Acyrthosiphon pisum (strain 5A).